Consider the following 156-residue polypeptide: SsrA-binding protein (156 aa).

The span at 135-150 (KRDTIKDREWQRDRSR) shows a compositional bias: basic and acidic residues. Positions 135-156 (KRDTIKDREWQRDRSRIMKKNT) are disordered.

This sequence belongs to the SmpB family.

It is found in the cytoplasm. In terms of biological role, required for rescue of stalled ribosomes mediated by trans-translation. Binds to transfer-messenger RNA (tmRNA), required for stable association of tmRNA with ribosomes. tmRNA and SmpB together mimic tRNA shape, replacing the anticodon stem-loop with SmpB. tmRNA is encoded by the ssrA gene; the 2 termini fold to resemble tRNA(Ala) and it encodes a 'tag peptide', a short internal open reading frame. During trans-translation Ala-aminoacylated tmRNA acts like a tRNA, entering the A-site of stalled ribosomes, displacing the stalled mRNA. The ribosome then switches to translate the ORF on the tmRNA; the nascent peptide is terminated with the 'tag peptide' encoded by the tmRNA and targeted for degradation. The ribosome is freed to recommence translation, which seems to be the essential function of trans-translation. This chain is SsrA-binding protein, found in Legionella pneumophila (strain Corby).